We begin with the raw amino-acid sequence, 207 residues long: Large ribosomal subunit protein uL4 (207 aa).

The tract at residues 59–78 (GSGKKPFKQKGTGQARQGCK) is disordered.

Belongs to the universal ribosomal protein uL4 family. In terms of assembly, part of the 50S ribosomal subunit.

In terms of biological role, one of the primary rRNA binding proteins, this protein initially binds near the 5'-end of the 23S rRNA. It is important during the early stages of 50S assembly. It makes multiple contacts with different domains of the 23S rRNA in the assembled 50S subunit and ribosome. Forms part of the polypeptide exit tunnel. This Geotalea daltonii (strain DSM 22248 / JCM 15807 / FRC-32) (Geobacter daltonii) protein is Large ribosomal subunit protein uL4.